Reading from the N-terminus, the 321-residue chain is Acetyl-coenzyme A carboxylase carboxyl transferase subunit alpha (321 aa).

A CoA carboxyltransferase C-terminal domain is found at 39-293; the sequence is RLQQKSQNLA…RRALGDALRQ (255 aa).

Belongs to the AccA family. Acetyl-CoA carboxylase is a heterohexamer composed of biotin carboxyl carrier protein (AccB), biotin carboxylase (AccC) and two subunits each of ACCase subunit alpha (AccA) and ACCase subunit beta (AccD).

The protein localises to the cytoplasm. It carries out the reaction N(6)-carboxybiotinyl-L-lysyl-[protein] + acetyl-CoA = N(6)-biotinyl-L-lysyl-[protein] + malonyl-CoA. The protein operates within lipid metabolism; malonyl-CoA biosynthesis; malonyl-CoA from acetyl-CoA: step 1/1. Component of the acetyl coenzyme A carboxylase (ACC) complex. First, biotin carboxylase catalyzes the carboxylation of biotin on its carrier protein (BCCP) and then the CO(2) group is transferred by the carboxyltransferase to acetyl-CoA to form malonyl-CoA. The chain is Acetyl-coenzyme A carboxylase carboxyl transferase subunit alpha from Bordetella bronchiseptica (strain ATCC BAA-588 / NCTC 13252 / RB50) (Alcaligenes bronchisepticus).